A 150-amino-acid chain; its full sequence is D-aminoacyl-tRNA deacylase (150 aa).

A Gly-cisPro motif, important for rejection of L-amino acids motif is present at residues Gly-140–Pro-141.

It belongs to the DTD family. As to quaternary structure, homodimer.

The protein resides in the cytoplasm. The catalysed reaction is glycyl-tRNA(Ala) + H2O = tRNA(Ala) + glycine + H(+). The enzyme catalyses a D-aminoacyl-tRNA + H2O = a tRNA + a D-alpha-amino acid + H(+). An aminoacyl-tRNA editing enzyme that deacylates mischarged D-aminoacyl-tRNAs. Also deacylates mischarged glycyl-tRNA(Ala), protecting cells against glycine mischarging by AlaRS. Acts via tRNA-based rather than protein-based catalysis; rejects L-amino acids rather than detecting D-amino acids in the active site. By recycling D-aminoacyl-tRNA to D-amino acids and free tRNA molecules, this enzyme counteracts the toxicity associated with the formation of D-aminoacyl-tRNA entities in vivo and helps enforce protein L-homochirality. This Kluyveromyces lactis (strain ATCC 8585 / CBS 2359 / DSM 70799 / NBRC 1267 / NRRL Y-1140 / WM37) (Yeast) protein is D-aminoacyl-tRNA deacylase (DTD1).